The primary structure comprises 476 residues: Aspartyl/glutamyl-tRNA(Asn/Gln) amidotransferase subunit B (476 aa).

Belongs to the GatB/GatE family. GatB subfamily. As to quaternary structure, heterotrimer of A, B and C subunits.

The catalysed reaction is L-glutamyl-tRNA(Gln) + L-glutamine + ATP + H2O = L-glutaminyl-tRNA(Gln) + L-glutamate + ADP + phosphate + H(+). It carries out the reaction L-aspartyl-tRNA(Asn) + L-glutamine + ATP + H2O = L-asparaginyl-tRNA(Asn) + L-glutamate + ADP + phosphate + 2 H(+). Its function is as follows. Allows the formation of correctly charged Asn-tRNA(Asn) or Gln-tRNA(Gln) through the transamidation of misacylated Asp-tRNA(Asn) or Glu-tRNA(Gln) in organisms which lack either or both of asparaginyl-tRNA or glutaminyl-tRNA synthetases. The reaction takes place in the presence of glutamine and ATP through an activated phospho-Asp-tRNA(Asn) or phospho-Glu-tRNA(Gln). This is Aspartyl/glutamyl-tRNA(Asn/Gln) amidotransferase subunit B from Clostridium botulinum (strain Eklund 17B / Type B).